Consider the following 673-residue polypeptide: UvrABC system protein B (673 aa).

Positions Glu26 to Arg414 constitute a Helicase ATP-binding domain. Gly39–Thr46 serves as a coordination point for ATP. The Beta-hairpin signature appears at Tyr92 to Ile115. A Helicase C-terminal domain is found at Gln431–Leu597. One can recognise a UVR domain in the interval Gln633–Leu668.

This sequence belongs to the UvrB family. As to quaternary structure, forms a heterotetramer with UvrA during the search for lesions. Interacts with UvrC in an incision complex.

The protein resides in the cytoplasm. In terms of biological role, the UvrABC repair system catalyzes the recognition and processing of DNA lesions. A damage recognition complex composed of 2 UvrA and 2 UvrB subunits scans DNA for abnormalities. Upon binding of the UvrA(2)B(2) complex to a putative damaged site, the DNA wraps around one UvrB monomer. DNA wrap is dependent on ATP binding by UvrB and probably causes local melting of the DNA helix, facilitating insertion of UvrB beta-hairpin between the DNA strands. Then UvrB probes one DNA strand for the presence of a lesion. If a lesion is found the UvrA subunits dissociate and the UvrB-DNA preincision complex is formed. This complex is subsequently bound by UvrC and the second UvrB is released. If no lesion is found, the DNA wraps around the other UvrB subunit that will check the other stand for damage. This is UvrABC system protein B from Salmonella paratyphi A (strain ATCC 9150 / SARB42).